Consider the following 61-residue polypeptide: Large ribosomal subunit protein uL30 (61 aa).

Belongs to the universal ribosomal protein uL30 family. Part of the 50S ribosomal subunit.

The polypeptide is Large ribosomal subunit protein uL30 (Nitrosomonas eutropha (strain DSM 101675 / C91 / Nm57)).